Here is a 465-residue protein sequence, read N- to C-terminus: Siroheme synthase (465 aa).

The interval 1 to 203 (MDFLPLFHSL…GRPAEAERLL (203 aa)) is precorrin-2 dehydrogenase /sirohydrochlorin ferrochelatase. NAD(+) is bound by residues 22-23 (EV) and 43-44 (PQ). S128 is modified (phosphoserine). Residues 217-465 (GEVYLVGAGP…AWFEGAREGA (249 aa)) are uroporphyrinogen-III C-methyltransferase. S-adenosyl-L-methionine is bound at residue P226. Catalysis depends on D249, which acts as the Proton acceptor. The active-site Proton donor is K271. Residues 302–304 (GGD), I307, 332–333 (TA), M384, and G413 each bind S-adenosyl-L-methionine.

The protein in the N-terminal section; belongs to the precorrin-2 dehydrogenase / sirohydrochlorin ferrochelatase family. It in the C-terminal section; belongs to the precorrin methyltransferase family.

The enzyme catalyses uroporphyrinogen III + 2 S-adenosyl-L-methionine = precorrin-2 + 2 S-adenosyl-L-homocysteine + H(+). It catalyses the reaction precorrin-2 + NAD(+) = sirohydrochlorin + NADH + 2 H(+). The catalysed reaction is siroheme + 2 H(+) = sirohydrochlorin + Fe(2+). The protein operates within cofactor biosynthesis; adenosylcobalamin biosynthesis; precorrin-2 from uroporphyrinogen III: step 1/1. It functions in the pathway cofactor biosynthesis; adenosylcobalamin biosynthesis; sirohydrochlorin from precorrin-2: step 1/1. Its pathway is porphyrin-containing compound metabolism; siroheme biosynthesis; precorrin-2 from uroporphyrinogen III: step 1/1. It participates in porphyrin-containing compound metabolism; siroheme biosynthesis; siroheme from sirohydrochlorin: step 1/1. The protein operates within porphyrin-containing compound metabolism; siroheme biosynthesis; sirohydrochlorin from precorrin-2: step 1/1. Multifunctional enzyme that catalyzes the SAM-dependent methylations of uroporphyrinogen III at position C-2 and C-7 to form precorrin-2 via precorrin-1. Then it catalyzes the NAD-dependent ring dehydrogenation of precorrin-2 to yield sirohydrochlorin. Finally, it catalyzes the ferrochelation of sirohydrochlorin to yield siroheme. The chain is Siroheme synthase from Pseudomonas paraeruginosa (strain DSM 24068 / PA7) (Pseudomonas aeruginosa (strain PA7)).